The sequence spans 629 residues: Probable potassium transport system protein Kup 3 (629 aa).

Transmembrane regions (helical) follow at residues 20 to 40 (LSLS…LYTF), 61 to 81 (VSLI…SFAL), 106 to 126 (PFII…GTIT), 143 to 163 (PSLK…LFAI), 171 to 191 (IGKA…ILGA), 212 to 232 (FLFS…LCVT), 253 to 273 (WFGL…ALVL), 291 to 311 (FLLP…QAII), 343 to 363 (IYIG…TIGF), 372 to 392 (AYGI…FIAL), 400 to 420 (IITS…FFAA), and 425 to 445 (FING…MMYI).

This sequence belongs to the HAK/KUP transporter (TC 2.A.72) family.

It localises to the cell inner membrane. It carries out the reaction K(+)(in) + H(+)(in) = K(+)(out) + H(+)(out). Functionally, transport of potassium into the cell. Likely operates as a K(+):H(+) symporter. The protein is Probable potassium transport system protein Kup 3 of Legionella pneumophila (strain Lens).